The following is a 450-amino-acid chain: Glucose-6-phosphate isomerase (450 aa).

E289 functions as the Proton donor in the catalytic mechanism. Residues H310 and K424 contribute to the active site.

It belongs to the GPI family.

The protein resides in the cytoplasm. The catalysed reaction is alpha-D-glucose 6-phosphate = beta-D-fructose 6-phosphate. It participates in carbohydrate biosynthesis; gluconeogenesis. The protein operates within carbohydrate degradation; glycolysis; D-glyceraldehyde 3-phosphate and glycerone phosphate from D-glucose: step 2/4. Catalyzes the reversible isomerization of glucose-6-phosphate to fructose-6-phosphate. This Leptospira biflexa serovar Patoc (strain Patoc 1 / Ames) protein is Glucose-6-phosphate isomerase.